The sequence spans 464 residues: Argininosuccinate lyase (464 aa).

It belongs to the lyase 1 family. Argininosuccinate lyase subfamily.

Its subcellular location is the cytoplasm. The enzyme catalyses 2-(N(omega)-L-arginino)succinate = fumarate + L-arginine. The protein operates within amino-acid biosynthesis; L-arginine biosynthesis; L-arginine from L-ornithine and carbamoyl phosphate: step 3/3. The polypeptide is Argininosuccinate lyase (Janthinobacterium sp. (strain Marseille) (Minibacterium massiliensis)).